A 124-amino-acid chain; its full sequence is UPF0102 protein Noca_3248 (124 aa).

It belongs to the UPF0102 family.

The polypeptide is UPF0102 protein Noca_3248 (Nocardioides sp. (strain ATCC BAA-499 / JS614)).